The sequence spans 149 residues: UPF0260 protein PA1299 (149 aa).

The protein belongs to the UPF0260 family.

This chain is UPF0260 protein PA1299, found in Pseudomonas aeruginosa (strain ATCC 15692 / DSM 22644 / CIP 104116 / JCM 14847 / LMG 12228 / 1C / PRS 101 / PAO1).